The sequence spans 351 residues: Peptide chain release factor 1 (351 aa).

Glutamine 229 is modified (N5-methylglutamine).

It belongs to the prokaryotic/mitochondrial release factor family. In terms of processing, methylated by PrmC. Methylation increases the termination efficiency of RF1.

Its subcellular location is the cytoplasm. Functionally, peptide chain release factor 1 directs the termination of translation in response to the peptide chain termination codons UAG and UAA. The polypeptide is Peptide chain release factor 1 (Cereibacter sphaeroides (strain ATCC 17025 / ATH 2.4.3) (Rhodobacter sphaeroides)).